A 388-amino-acid chain; its full sequence is Interferon alpha/beta receptor 1b (388 aa).

2 consecutive Fibronectin type-III domains span residues 5–102 (LPQP…FCPD) and 109–211 (PPSR…TEGD). The chain crosses the membrane as a helical span at residues 217-237 (IFLYFLVSMMVCFLLVLLSSY). The interval 308-357 (TAPPSELEQDSGRHIRQDSGDSGIYSTEGGSAQQGRSGGEPIRRDQEVDS) is disordered. Basic and acidic residues predominate over residues 317–326 (DSGRHIRQDS). Over residues 331–342 (IYSTEGGSAQQG) the composition is skewed to polar residues.

This sequence belongs to the type II cytokine receptor family. Heterodimer with IFNAR2; forming the receptor for type I interferon.

It localises to the cell membrane. The protein localises to the cytoplasm. The protein resides in the perinuclear region. Its function is as follows. Together with IFNAR2, forms the heterodimeric receptor for type I interferons (including interferons alpha, beta, epsilon, omega and kappa). Type I interferon binding activates the JAK-STAT signaling cascade, resulting in transcriptional activation or repression of interferon-regulated genes that encode the effectors of the interferon response. Mechanistically, type I interferon-binding brings the IFNAR1 and IFNAR2 subunits into close proximity with one another, driving their associated Janus kinases (JAKs) (TYK2 bound to IFNAR1 and JAK1 bound to IFNAR2) to cross-phosphorylate one another. The activated kinases phosphorylate specific tyrosine residues on the intracellular domains of IFNAR1 and IFNAR2, forming docking sites for the STAT transcription factors. STAT proteins are then phosphorylated by the JAKs, promoting their translocation into the nucleus to regulate expression of interferon-regulated genes. The chain is Interferon alpha/beta receptor 1b from Oncorhynchus mykiss (Rainbow trout).